The primary structure comprises 359 residues: Guanine nucleotide-binding protein subunit alpha-11 (359 aa).

Residues Cys-9 and Cys-10 are each lipidated (S-palmitoyl cysteine). Residues 38–359 enclose the G-alpha domain; the sequence is RELKLLLLGT…QLNLKEYNLV (322 aa). The tract at residues 41-54 is G1 motif; it reads KLLLLGTGESGKST. Residues 46-53 and 180-183 contribute to the GTP site; these read GTGESGKS and LRVR. Ser-53 provides a ligand contact to Mg(2+). The G2 motif stretch occupies residues 178–186; the sequence is DVLRVRVPT. Thr-186 provides a ligand contact to Mg(2+). The G3 motif stretch occupies residues 201–210; that stretch reads FRMVDVGGQR. Positions 270–277 are G4 motif; sequence ILFLNKKD. GTP is bound by residues 274–277 and Ala-331; that span reads NKKD. Positions 329 to 334 are G5 motif; sequence TCATDT.

It belongs to the G-alpha family. G(q) subfamily. As to quaternary structure, g proteins are composed of 3 units; alpha, beta and gamma. The alpha chain contains the guanine nucleotide binding site. Interacts with RGS22. Interacts with NTSR1.

It is found in the cell membrane. The protein localises to the cytoplasm. The catalysed reaction is GTP + H2O = GDP + phosphate + H(+). Its function is as follows. Guanine nucleotide-binding proteins (G proteins) function as transducers downstream of G protein-coupled receptors (GPCRs) in numerous signaling cascades. The alpha chain contains the guanine nucleotide binding site and alternates between an active, GTP-bound state and an inactive, GDP-bound state. Signaling by an activated GPCR promotes GDP release and GTP binding. The alpha subunit has a low GTPase activity that converts bound GTP to GDP, thereby terminating the signal. Both GDP release and GTP hydrolysis are modulated by numerous regulatory proteins. Signaling is mediated via phospholipase C-beta-dependent inositol lipid hydrolysis for signal propagation: activates phospholipase C-beta: following GPCR activation, GNA11 activates PLC-beta (PLCB1, PLCB2, PLCB3 or PLCB4), leading to production of diacylglycerol (DAG) and inositol 1,4,5-trisphosphate (IP3). Transduces FFAR4 signaling in response to long-chain fatty acids (LCFAs). Together with GNAQ, required for heart development. In the respiratory epithelium, transmits OXGR1-dependent signals that lead to downstream intracellular Ca(2+) release and mucocilliary clearance of airborne pathogens. The sequence is that of Guanine nucleotide-binding protein subunit alpha-11 (Gna11) from Mus musculus (Mouse).